Reading from the N-terminus, the 223-residue chain is 2-C-methyl-D-erythritol 4-phosphate cytidylyltransferase (223 aa).

The protein belongs to the IspD/TarI cytidylyltransferase family. IspD subfamily.

The enzyme catalyses 2-C-methyl-D-erythritol 4-phosphate + CTP + H(+) = 4-CDP-2-C-methyl-D-erythritol + diphosphate. It participates in isoprenoid biosynthesis; isopentenyl diphosphate biosynthesis via DXP pathway; isopentenyl diphosphate from 1-deoxy-D-xylulose 5-phosphate: step 2/6. Functionally, catalyzes the formation of 4-diphosphocytidyl-2-C-methyl-D-erythritol from CTP and 2-C-methyl-D-erythritol 4-phosphate (MEP). The protein is 2-C-methyl-D-erythritol 4-phosphate cytidylyltransferase of Prochlorococcus marinus (strain MIT 9301).